We begin with the raw amino-acid sequence, 712 residues long: MKFFVSCAKGLEYLLADELSALGLEKATATIAGVNAEGELEQALRIVMWSRLASRVLWPIDAFECPDEQALYDGVRALPWHEHIKPEMTLAVDAHVSGDKITHARFAAQRIKDAIVDRMRDEGLERPSVNTDLPDVRVNLSLRKGRASLSIDLGGGSLHRRGWRGAAHEAPLKENLAAALLLRAQWPRLHAAGGGLLDPMCGSGTLLIEGALMAADVAPGLMRHGSLPPSRWLGFDKAAWKAIQSEARDREAAGLAALKPVIHGSDIDPTAIQAARENAEVAGVAHAIRFTRADVADLAAPEQEIGAVVCNPPYDERLAADPALYRALGNALQKAVPQWRASLLCGNDELAFATGLRAGKKYQMFNGALECALIICDPIAVPGRDPAQPRELSEGAQMVANRLRKNLKKFKSWRAREDITCFRAYDADLPEYAAAIDVYEEDGGQRRTFLHVQEYAAPAAIPENDVRRRRNELLAAAREVFGVPPEQVSMKSRERGKGGSKYGRFEQRDEFIVVRENNALLQVNLFDYLDTGLFLDHRPLRRMMAEQALGKRFLNLFCYTGVASVQAAVAGAASTTSVDLSATYLQWCYDNLALNGQGGNQHLLVQADAMAWLEGDRGQYDVIFCDPPTFSNSARADDFDVQREQLKLLRAAVARLAPGGVLYFSNNFRRFKLEENAIAEFAQCREITARTIGPDFERNARIHRAWELKRLG.

Residues 42–153 form the THUMP domain; it reads QALRIVMWSR…KGRASLSIDL (112 aa).

Belongs to the methyltransferase superfamily. RlmKL family.

It is found in the cytoplasm. It carries out the reaction guanosine(2445) in 23S rRNA + S-adenosyl-L-methionine = N(2)-methylguanosine(2445) in 23S rRNA + S-adenosyl-L-homocysteine + H(+). The enzyme catalyses guanosine(2069) in 23S rRNA + S-adenosyl-L-methionine = N(2)-methylguanosine(2069) in 23S rRNA + S-adenosyl-L-homocysteine + H(+). In terms of biological role, specifically methylates the guanine in position 2445 (m2G2445) and the guanine in position 2069 (m7G2069) of 23S rRNA. This chain is Ribosomal RNA large subunit methyltransferase K/L, found in Stenotrophomonas maltophilia (strain R551-3).